We begin with the raw amino-acid sequence, 163 residues long: 18 kDa protein (163 aa).

The protein is 18 kDa protein of Mus musculus (Mouse).